A 615-amino-acid chain; its full sequence is Delta(14)-sterol reductase LBR (615 aa).

The Tudor domain maps to 1–62; sequence MPSRKFADGE…DIKPLTSFRQ (62 aa). Residues 1–211 lie on the Nuclear side of the membrane; sequence MPSRKFADGE…IRAKDLEFGG (211 aa). A disordered region spans residues 52 to 109; the sequence is NDIKPLTSFRQRKGGSTSSSPSRRRGSRSRSRSRSPGRPPKSARRSASASHQADIKEA. Lys55 carries the N6-acetyllysine modification. At Thr58 the chain carries Phosphothreonine. A phosphoserine mark is found at Ser59 and Ser67. Phosphoserine; by CDK1 occurs at positions 71 and 86. A compositionally biased stretch (basic residues) spans 73–86; sequence SRRRGSRSRSRSRS. Phosphoserine occurs at positions 97 and 99. A Phosphothreonine modification is found at Thr118. Position 128 is a phosphoserine (Ser128). Thr200 carries the post-translational modification Phosphothreonine. 8 helical membrane-spanning segments follow: residues 212–232, 258–278, 299–319, 326–346, 386–406, 447–467, 481–501, and 561–581; these read VPGVFLIMFGLPVFLFLLLLM, VFGVYLLWFLIQVLFYLLPIG, FYAFILTSAVIGTSLFQGVEF, FLQFALAATVFCVVLSVYLYM, FCELRPGLIGWVVINLVMLLA, IIHDGFGFMLAFGDLVWVPFI, EVSWPMASLIIVLKLCGYVIF, and PCGFNHILPYFYIIYFTMLLV. An N6-acetyllysine mark is found at Lys594 and Lys601.

This sequence belongs to the ERG4/ERG24 family. Interacts with CBX5. Interacts with DNA. Interaction with DNA is sequence independent with higher affinity for supercoiled and relaxed circular DNA than linear DNA. Interacts with lamin B. Interacts with CLNK. Interacts with TMEM147; promoting LBR localization to the nucleus inner membrane. Phosphorylated by CDK1 in mitosis when the inner nuclear membrane breaks down into vesicles that dissociate from the lamina and the chromatin. It is phosphorylated by different protein kinases in interphase when the membrane is associated with these structures. Phosphorylation of LBR and HP1 proteins may be responsible for some of the alterations in chromatin organization and nuclear structure which occur at various times during the cell cycle. Phosphorylated by SRPK1. In late anaphase LBR is dephosphorylated, probably by PP1 and/or PP2A, allowing reassociation with chromatin. Expressed in the bone marrow, liver, heart, adrenal gland, lung, placenta and uterus. Expressed in osteoclasts and osteoblast-like cells.

It localises to the nucleus inner membrane. It is found in the endoplasmic reticulum membrane. The protein localises to the cytoplasm. The protein resides in the nucleus. The catalysed reaction is 5alpha-cholest-8,14-dien-3beta-ol + NADPH + H(+) = 5alpha-cholest-8-en-3beta-ol + NADP(+). The enzyme catalyses 4,4-dimethyl-5alpha-cholesta-8,24-dien-3beta-ol + NADP(+) = 4,4-dimethyl-5alpha-cholesta-8,14,24-trien-3beta-ol + NADPH + H(+). It carries out the reaction 4,4-dimethyl-8,14-cholestadien-3beta-ol + NADPH + H(+) = 4,4-dimethyl-5alpha-cholest-8-en-3beta-ol + NADP(+). It functions in the pathway steroid biosynthesis; cholesterol biosynthesis. In terms of biological role, catalyzes the reduction of the C14-unsaturated bond of lanosterol, as part of the metabolic pathway leading to cholesterol biosynthesis. Plays a critical role in myeloid cell cholesterol biosynthesis which is essential to both myeloid cell growth and functional maturation. Mediates the activation of NADPH oxidases, perhaps by maintaining critical levels of cholesterol required for membrane lipid raft formation during neutrophil differentiation. Anchors the lamina and the heterochromatin to the inner nuclear membrane. The polypeptide is Delta(14)-sterol reductase LBR (LBR) (Homo sapiens (Human)).